The chain runs to 291 residues: Light-independent protochlorophyllide reductase iron-sulfur ATP-binding protein (291 aa).

Residues 10–15 (GIGKST) and lysine 39 each bind ATP. Serine 14 is a binding site for Mg(2+). Cysteine 95 and cysteine 129 together coordinate [4Fe-4S] cluster. 180 to 181 (NR) is an ATP binding site.

Belongs to the NifH/BchL/ChlL family. In terms of assembly, homodimer. Protochlorophyllide reductase is composed of three subunits; ChlL, ChlN and ChlB. Requires [4Fe-4S] cluster as cofactor.

It is found in the plastid. It localises to the chloroplast. The catalysed reaction is chlorophyllide a + oxidized 2[4Fe-4S]-[ferredoxin] + 2 ADP + 2 phosphate = protochlorophyllide a + reduced 2[4Fe-4S]-[ferredoxin] + 2 ATP + 2 H2O. It functions in the pathway porphyrin-containing compound metabolism; chlorophyll biosynthesis (light-independent). Functionally, component of the dark-operative protochlorophyllide reductase (DPOR) that uses Mg-ATP and reduced ferredoxin to reduce ring D of protochlorophyllide (Pchlide) to form chlorophyllide a (Chlide). This reaction is light-independent. The L component serves as a unique electron donor to the NB-component of the complex, and binds Mg-ATP. The protein is Light-independent protochlorophyllide reductase iron-sulfur ATP-binding protein of Pinus contorta (Shore pine).